Reading from the N-terminus, the 385-residue chain is 1-deoxy-D-xylulose 5-phosphate reductoisomerase 1 (385 aa).

NADPH is bound by residues Thr11, Gly12, Ser13, Ile14, Asn39, and Asn122. Lys123 contacts 1-deoxy-D-xylulose 5-phosphate. NADPH is bound at residue Glu124. Residue Asp148 coordinates Mn(2+). Positions 149, 150, 174, and 197 each coordinate 1-deoxy-D-xylulose 5-phosphate. Residue Glu150 coordinates Mn(2+). Position 203 (Gly203) interacts with NADPH. The 1-deoxy-D-xylulose 5-phosphate site is built by Ser210, Asn215, Lys216, and Glu219. Residue Glu219 coordinates Mn(2+).

It belongs to the DXR family. It depends on Mg(2+) as a cofactor. Mn(2+) is required as a cofactor.

It carries out the reaction 2-C-methyl-D-erythritol 4-phosphate + NADP(+) = 1-deoxy-D-xylulose 5-phosphate + NADPH + H(+). The protein operates within isoprenoid biosynthesis; isopentenyl diphosphate biosynthesis via DXP pathway; isopentenyl diphosphate from 1-deoxy-D-xylulose 5-phosphate: step 1/6. Catalyzes the NADPH-dependent rearrangement and reduction of 1-deoxy-D-xylulose-5-phosphate (DXP) to 2-C-methyl-D-erythritol 4-phosphate (MEP). The sequence is that of 1-deoxy-D-xylulose 5-phosphate reductoisomerase 1 from Bacillus thuringiensis subsp. konkukian (strain 97-27).